The chain runs to 305 residues: MAERNELHKRNRHNGQYDFSRLTEEYPPLKKFIVLNAYGTTSIDFFNPRAVKALNKALLISCYGIRYWDIPKNYLCPPIPGRADYIHYIADLIQPDISDESTGLKTAIPNARQYRCLDIGVGANCIYPIIGQTEYGWTFVGSDIDPVSIDNARKIVTCNPALAHKIELRLQRDSRKIFEGIIAPNEYFDVTLCNPPFHSSKEEAEDGTLRKLSSLKGKKVTKARLNFGGNANELWCEGGELRFLLTMIEESRNYRKNCGWFTSLVSKEKNLGKLTAKLKSTDIAEHRIIEMHQGTKTSRILAWRF.

It belongs to the methyltransferase superfamily. METTL16/RlmF family.

It is found in the cytoplasm. The catalysed reaction is adenosine(1618) in 23S rRNA + S-adenosyl-L-methionine = N(6)-methyladenosine(1618) in 23S rRNA + S-adenosyl-L-homocysteine + H(+). In terms of biological role, specifically methylates the adenine in position 1618 of 23S rRNA. This chain is Ribosomal RNA large subunit methyltransferase F, found in Bacteroides fragilis (strain YCH46).